Here is a 345-residue protein sequence, read N- to C-terminus: Eukaryotic translation initiation factor 3 subunit F (345 aa).

The MPN domain maps to 30-166 (VVIQPQAIFS…TRAYISAPVG (137 aa)). Positions 310-345 (EGASAEAGAQRGQRGGKGGRGGQQRTQERASEEVRA) are disordered. A compositionally biased stretch (low complexity) spans 312-321 (ASAEAGAQRG). Gly residues predominate over residues 322 to 331 (QRGGKGGRGG). Positions 335–345 (TQERASEEVRA) are enriched in basic and acidic residues.

Belongs to the eIF-3 subunit F family. Component of the eukaryotic translation initiation factor 3 (eIF-3) complex.

The protein localises to the cytoplasm. Its function is as follows. Component of the eukaryotic translation initiation factor 3 (eIF-3) complex, which is involved in protein synthesis of a specialized repertoire of mRNAs and, together with other initiation factors, stimulates binding of mRNA and methionyl-tRNAi to the 40S ribosome. The eIF-3 complex specifically targets and initiates translation of a subset of mRNAs involved in cell proliferation. This chain is Eukaryotic translation initiation factor 3 subunit F, found in Aspergillus fumigatus (strain CBS 144.89 / FGSC A1163 / CEA10) (Neosartorya fumigata).